The chain runs to 364 residues: Ribosomal RNA large subunit methyltransferase M (364 aa).

Residues Ser187, 220–223, Asp239, Asp259, and Asp276 contribute to the S-adenosyl-L-methionine site; that span reads CPGG. Catalysis depends on Lys305, which acts as the Proton acceptor.

The protein belongs to the class I-like SAM-binding methyltransferase superfamily. RNA methyltransferase RlmE family. RlmM subfamily. In terms of assembly, monomer.

It is found in the cytoplasm. It catalyses the reaction cytidine(2498) in 23S rRNA + S-adenosyl-L-methionine = 2'-O-methylcytidine(2498) in 23S rRNA + S-adenosyl-L-homocysteine + H(+). In terms of biological role, catalyzes the 2'-O-methylation at nucleotide C2498 in 23S rRNA. In Aeromonas hydrophila subsp. hydrophila (strain ATCC 7966 / DSM 30187 / BCRC 13018 / CCUG 14551 / JCM 1027 / KCTC 2358 / NCIMB 9240 / NCTC 8049), this protein is Ribosomal RNA large subunit methyltransferase M.